The primary structure comprises 969 residues: Bifunctional glutamine synthetase adenylyltransferase/adenylyl-removing enzyme (969 aa).

Positions 1–456 are adenylyl removase; sequence MNWQANIHKL…HFEQLFAAPH (456 aa). The adenylyl transferase stretch occupies residues 466–969; sequence EKRLAEVWLG…SALLEDESAK (504 aa).

The protein belongs to the GlnE family. Mg(2+) is required as a cofactor.

The enzyme catalyses [glutamine synthetase]-O(4)-(5'-adenylyl)-L-tyrosine + phosphate = [glutamine synthetase]-L-tyrosine + ADP. It carries out the reaction [glutamine synthetase]-L-tyrosine + ATP = [glutamine synthetase]-O(4)-(5'-adenylyl)-L-tyrosine + diphosphate. Involved in the regulation of glutamine synthetase GlnA, a key enzyme in the process to assimilate ammonia. When cellular nitrogen levels are high, the C-terminal adenylyl transferase (AT) inactivates GlnA by covalent transfer of an adenylyl group from ATP to specific tyrosine residue of GlnA, thus reducing its activity. Conversely, when nitrogen levels are low, the N-terminal adenylyl removase (AR) activates GlnA by removing the adenylyl group by phosphorolysis, increasing its activity. The regulatory region of GlnE binds the signal transduction protein PII (GlnB) which indicates the nitrogen status of the cell. This chain is Bifunctional glutamine synthetase adenylyltransferase/adenylyl-removing enzyme, found in Nitrosococcus oceani (strain ATCC 19707 / BCRC 17464 / JCM 30415 / NCIMB 11848 / C-107).